The following is a 450-amino-acid chain: Thiamine biosynthesis regulatory protein (450 aa).

Residues methionine 1–lysine 12 show a composition bias toward basic residues. A disordered region spans residues methionine 1–lysine 23. The segment covering valine 13 to lysine 23 has biased composition (low complexity). Residues cysteine 30–cysteine 57 constitute a DNA-binding region (zn(2)-C6 fungal-type). The tract at residues threonine 210–proline 234 is disordered.

It is found in the nucleus. Functionally, positive regulator of thiamine biosynthesis. The chain is Thiamine biosynthesis regulatory protein (THI2) from Saccharomyces cerevisiae (strain ATCC 204508 / S288c) (Baker's yeast).